A 562-amino-acid chain; its full sequence is Dihydroxy-acid dehydratase (562 aa).

Asp80 is a Mg(2+) binding site. A [2Fe-2S] cluster-binding site is contributed by Cys121. Mg(2+)-binding residues include Asp122 and Lys123. N6-carboxylysine is present on Lys123. Cys194 is a binding site for [2Fe-2S] cluster. Glu446 provides a ligand contact to Mg(2+). Ser472 functions as the Proton acceptor in the catalytic mechanism.

This sequence belongs to the IlvD/Edd family. As to quaternary structure, homodimer. Requires [2Fe-2S] cluster as cofactor. The cofactor is Mg(2+).

It catalyses the reaction (2R)-2,3-dihydroxy-3-methylbutanoate = 3-methyl-2-oxobutanoate + H2O. The enzyme catalyses (2R,3R)-2,3-dihydroxy-3-methylpentanoate = (S)-3-methyl-2-oxopentanoate + H2O. Its pathway is amino-acid biosynthesis; L-isoleucine biosynthesis; L-isoleucine from 2-oxobutanoate: step 3/4. It participates in amino-acid biosynthesis; L-valine biosynthesis; L-valine from pyruvate: step 3/4. Functionally, functions in the biosynthesis of branched-chain amino acids. Catalyzes the dehydration of (2R,3R)-2,3-dihydroxy-3-methylpentanoate (2,3-dihydroxy-3-methylvalerate) into 2-oxo-3-methylpentanoate (2-oxo-3-methylvalerate) and of (2R)-2,3-dihydroxy-3-methylbutanoate (2,3-dihydroxyisovalerate) into 2-oxo-3-methylbutanoate (2-oxoisovalerate), the penultimate precursor to L-isoleucine and L-valine, respectively. This Staphylococcus epidermidis (strain ATCC 35984 / DSM 28319 / BCRC 17069 / CCUG 31568 / BM 3577 / RP62A) protein is Dihydroxy-acid dehydratase.